The sequence spans 130 residues: Small ribosomal subunit protein uS9 (130 aa).

This sequence belongs to the universal ribosomal protein uS9 family.

This Burkholderia multivorans (strain ATCC 17616 / 249) protein is Small ribosomal subunit protein uS9.